Consider the following 293-residue polypeptide: Phospholipid scramblase 2 (293 aa).

Residues 1–39 (MDKQNVQMNPPHPGTNLTGPPGHIGYPGPQAGYAVPPPG) are disordered. Residues 1–66 (MDKQNVQMNP…GHPGAPTQVP (66 aa)) form a proline-rich domain (PRD) region. Over 1–270 (MDKQNVQMNP…IQFPLDLDVK (270 aa)) the chain is Cytoplasmic. Thr143 is subject to Phosphothreonine; by PKC. Residues Cys166, Cys167, Cys170, and Cys171 are each lipidated (S-palmitoyl cysteine). Residues 271–287 (MKAVMLGACFLIDFMFF) traverse the membrane as a helical segment. The Extracellular portion of the chain corresponds to 288–293 (EMTRGE).

It belongs to the phospholipid scramblase family. Ca(2+) is required as a cofactor.

It localises to the membrane. It carries out the reaction a 1,2-diacyl-sn-glycero-3-phosphocholine(in) = a 1,2-diacyl-sn-glycero-3-phosphocholine(out). May catalyze calcium-induced ATP-independent rapid bidirectional and non-specific movement of phospholipids (lipid scrambling or lipid flip-flop) between the inner and outer leaflet of the plasma membrane. The sequence is that of Phospholipid scramblase 2 from Bos taurus (Bovine).